The chain runs to 444 residues: Serine--tRNA ligase (444 aa).

243–245 (TAE) contacts L-serine. 274 to 276 (RSE) provides a ligand contact to ATP. Glu297 provides a ligand contact to L-serine. 361–364 (EISS) contributes to the ATP binding site. Residue Ser397 coordinates L-serine.

This sequence belongs to the class-II aminoacyl-tRNA synthetase family. Type-1 seryl-tRNA synthetase subfamily. As to quaternary structure, homodimer. The tRNA molecule binds across the dimer.

The protein resides in the cytoplasm. The catalysed reaction is tRNA(Ser) + L-serine + ATP = L-seryl-tRNA(Ser) + AMP + diphosphate + H(+). The enzyme catalyses tRNA(Sec) + L-serine + ATP = L-seryl-tRNA(Sec) + AMP + diphosphate + H(+). The protein operates within aminoacyl-tRNA biosynthesis; selenocysteinyl-tRNA(Sec) biosynthesis; L-seryl-tRNA(Sec) from L-serine and tRNA(Sec): step 1/1. In terms of biological role, catalyzes the attachment of serine to tRNA(Ser). Is also able to aminoacylate tRNA(Sec) with serine, to form the misacylated tRNA L-seryl-tRNA(Sec), which will be further converted into selenocysteinyl-tRNA(Sec). The protein is Serine--tRNA ligase of Acidobacterium capsulatum (strain ATCC 51196 / DSM 11244 / BCRC 80197 / JCM 7670 / NBRC 15755 / NCIMB 13165 / 161).